A 274-amino-acid polypeptide reads, in one-letter code: Anamorsin homolog (274 aa).

The tract at residues 1-154 (MDRTRKQCSV…KKPSWKIGSS (154 aa)) is N-terminal SAM-like domain. The interval 154–185 (SFALKKSTKGSVKVNLDDDLIDEDSLLTEEDM) is linker. [2Fe-2S] cluster contacts are provided by cysteine 196, cysteine 205, cysteine 208, and cysteine 210. Residues 196-210 (CEVGSTRKACKNCTC) are fe-S binding site A. The [4Fe-4S] cluster site is built by cysteine 235, cysteine 238, cysteine 246, and cysteine 249. 2 short sequence motifs (cx2C motif) span residues 235–238 (CGSC) and 246–249 (CSTC). The segment at 235–249 (CGSCGLGDAFRCSTC) is fe-S binding site B.

Belongs to the anamorsin family. In terms of assembly, monomer. It depends on [2Fe-2S] cluster as a cofactor. The cofactor is [4Fe-4S] cluster.

Its subcellular location is the cytoplasm. The protein resides in the mitochondrion intermembrane space. In terms of biological role, component of the cytosolic iron-sulfur (Fe-S) protein assembly (CIA) machinery. Required for the maturation of extramitochondrial Fe-S proteins. Part of an electron transfer chain functioning in an early step of cytosolic Fe-S biogenesis, facilitating the de novo assembly of a [4Fe-4S] cluster on the cytosolic Fe-S scaffold complex. Electrons are transferred from NADPH via a FAD- and FMN-containing diflavin oxidoreductase. Together with the diflavin oxidoreductase, also required for the assembly of the diferric tyrosyl radical cofactor of ribonucleotide reductase (RNR), probably by providing electrons for reduction during radical cofactor maturation in the catalytic small subunit. This chain is Anamorsin homolog, found in Ricinus communis (Castor bean).